The following is a 492-amino-acid chain: Bifunctional purine biosynthesis protein PurH (492 aa).

One can recognise an MGS-like domain in the interval 1-144 (MKKAILSVSN…KNYKHVTTIV (144 aa)).

Belongs to the PurH family.

It carries out the reaction (6R)-10-formyltetrahydrofolate + 5-amino-1-(5-phospho-beta-D-ribosyl)imidazole-4-carboxamide = 5-formamido-1-(5-phospho-D-ribosyl)imidazole-4-carboxamide + (6S)-5,6,7,8-tetrahydrofolate. The catalysed reaction is IMP + H2O = 5-formamido-1-(5-phospho-D-ribosyl)imidazole-4-carboxamide. It functions in the pathway purine metabolism; IMP biosynthesis via de novo pathway; 5-formamido-1-(5-phospho-D-ribosyl)imidazole-4-carboxamide from 5-amino-1-(5-phospho-D-ribosyl)imidazole-4-carboxamide (10-formyl THF route): step 1/1. It participates in purine metabolism; IMP biosynthesis via de novo pathway; IMP from 5-formamido-1-(5-phospho-D-ribosyl)imidazole-4-carboxamide: step 1/1. The protein is Bifunctional purine biosynthesis protein PurH of Staphylococcus aureus (strain MRSA252).